A 465-amino-acid polypeptide reads, in one-letter code: RuvB-like helicase 2 (465 aa).

Gly-73–Thr-80 contributes to the ATP binding site.

Belongs to the RuvB family. Forms homohexameric rings. May form a dodecamer with pont made of two stacked hexameric rings. Component of the chromatin remodeling Ino80 complex.

The protein localises to the nucleus. It carries out the reaction ATP + H2O = ADP + phosphate + H(+). Acts as a transcriptional coactivator in Wg signaling. Functionally, proposed core component of the chromatin remodeling Ino80 complex which is involved in transcriptional regulation, DNA replication and probably DNA repair. This is RuvB-like helicase 2 from Aedes aegypti (Yellowfever mosquito).